Reading from the N-terminus, the 364-residue chain is Histidinol-phosphate aminotransferase (364 aa).

Residue Lys222 is modified to N6-(pyridoxal phosphate)lysine.

The protein belongs to the class-II pyridoxal-phosphate-dependent aminotransferase family. Histidinol-phosphate aminotransferase subfamily. Homodimer. The cofactor is pyridoxal 5'-phosphate.

The enzyme catalyses L-histidinol phosphate + 2-oxoglutarate = 3-(imidazol-4-yl)-2-oxopropyl phosphate + L-glutamate. The protein operates within amino-acid biosynthesis; L-histidine biosynthesis; L-histidine from 5-phospho-alpha-D-ribose 1-diphosphate: step 7/9. The polypeptide is Histidinol-phosphate aminotransferase (Brevibacillus brevis (strain 47 / JCM 6285 / NBRC 100599)).